Consider the following 134-residue polypeptide: Small ribosomal subunit protein uS9 (134 aa).

The disordered stretch occupies residues 109–134 (DARRTEPHKPSKSSKGPRARRQKSYR). The segment covering 118 to 134 (PSKSSKGPRARRQKSYR) has biased composition (basic residues).

The protein belongs to the universal ribosomal protein uS9 family.

The protein is Small ribosomal subunit protein uS9 of Methanococcus vannielii (strain ATCC 35089 / DSM 1224 / JCM 13029 / OCM 148 / SB).